The sequence spans 221 residues: MRFHTILLAALASLVIATPLPSDTDVSLERRQSMNSNDLEKGDCKSVAFIFARGSTEIGNMGFVVGPGVCSNLKSTLGSDKVACQGVGGAYTAGLIQNALPANTDSGSIKEAVKMFDLAAKCPDTQIVAGGYSQGSAVIDNAIQKLDDSTRDRVKGVVLFGFTRNLQDKGQIPGYPKDQTKVYCAVGDLVCSGTLIITASHMTYGLNAGDAAKFLASQVSV.

Positions 1 to 17 (MRFHTILLAALASLVIA) are cleaved as a signal peptide. 2 cysteine pairs are disulfide-bonded: Cys44/Cys122 and Cys70/Cys84. Catalysis depends on Ser133, which acts as the Nucleophile. A disulfide bridge links Cys184 with Cys191. The active site involves Asp188. The Proton donor/acceptor role is filled by His201.

Belongs to the cutinase family.

It localises to the secreted. It catalyses the reaction cutin + H2O = cutin monomers.. In terms of biological role, catalyzes the hydrolysis of complex carboxylic polyesters found in the cell wall of plants. Degrades cutin, a macromolecule that forms the structure of the plant cuticle. Also degrades suberin, a specialized macromolecule found in the cell wall of various plant tissues. In Emericella nidulans (strain FGSC A4 / ATCC 38163 / CBS 112.46 / NRRL 194 / M139) (Aspergillus nidulans), this protein is Cutinase 3.